Consider the following 152-residue polypeptide: Ribosome maturation factor RimP (152 aa).

It belongs to the RimP family.

It is found in the cytoplasm. Required for maturation of 30S ribosomal subunits. In Desulfitobacterium hafniense (strain Y51), this protein is Ribosome maturation factor RimP.